The chain runs to 90 residues: Small ribosomal subunit protein uS15c (90 aa).

This sequence belongs to the universal ribosomal protein uS15 family. Part of the 30S ribosomal subunit.

It localises to the plastid. The protein localises to the chloroplast. This is Small ribosomal subunit protein uS15c (rps15-A) from Oryza nivara (Indian wild rice).